Reading from the N-terminus, the 965-residue chain is SKI family transcriptional corepressor 1 (965 aa).

6 disordered regions span residues 45 to 72 (TQLG…SSAL), 278 to 367 (RTFS…GGGA), 410 to 458 (DDPV…GGGA), 530 to 592 (SGAP…GSYV), 615 to 777 (AYGA…FAPE), and 796 to 843 (VCTP…EDGL). Composition is skewed to gly residues over residues 283-312 (QGGG…GPGC), 356-367 (GPAGPGGPGGGA), and 418-442 (EPKG…GGPG). The segment covering 571-586 (LPPPLAPLPPPPPPPA) has biased composition (pro residues). Residues 620–632 (PARGPGPGAGSGG) are compositionally biased toward gly residues. The span at 641–650 (EGSSSYNSAS) shows a compositional bias: polar residues. 2 stretches are compositionally biased toward acidic residues: residues 654–663 (DTADEPEVDV) and 670–679 (DDEDAQEETE). The span at 800 to 823 (EAHEPDKEDNHSPADDLETRKSYP) shows a compositional bias: basic and acidic residues. The segment covering 824 to 835 (DQRSISQPSPAN) has biased composition (polar residues). Residues 858-922 (ENLAREELQK…DTLCNELDQE (65 aa)) are a coiled coil.

This sequence belongs to the SKI family. In terms of assembly, interacts with LBX1. Interacts with SMAD1, SMAD2 and SMAD3. Present specifically in cerebellar Purkinje cells (at protein level).

The protein resides in the nucleus. Its function is as follows. Acts as a transcriptional corepressor of LBX1. Inhibits BMP signaling. The sequence is that of SKI family transcriptional corepressor 1 (SKOR1) from Homo sapiens (Human).